The sequence spans 992 residues: Tubulin glycylase 3A (992 aa).

Disordered stretches follow at residues 1–54 and 68–113; these read MQTR…NRVV and QSDS…LGAP. The span at 7-26 shows a compositional bias: basic and acidic residues; that stretch reads SEPHRSRDQVTDGDRNRDQP. Residues 39 to 49 are compositionally biased toward pro residues; it reads VTPPAAPPPTP. Residues 295–645 form the TTL domain; that stretch reads FKLTACVAFL…RRTDPKAELG (351 aa). ATP-binding positions include 457-460, K470, and D472; that span reads QKYI. Disordered stretches follow at residues 746–766 and 791–828; these read SLCS…TATP and KRNT…PVES. Residues 794-807 show a composition bias toward polar residues; it reads TGGSLSGEQVQSTA.

The protein resides in the cytoplasm. It is found in the cytoskeleton. Its function is as follows. Polylycylase which modifies alpha- and beta-tubulin, generating side chains of glycine on the gamma-carboxyl groups of specific glutamate residues within the C-terminal tail of alpha- and beta-tubulin. Involved both in the side-chain initiation and elongation steps of the polyglycylation reaction by adding a single glycine chain to generate monoglycine side chains and by elongating monoglycine side chains to polyglycine side chains. In Drosophila melanogaster (Fruit fly), this protein is Tubulin glycylase 3A (TTLL3A).